A 518-amino-acid polypeptide reads, in one-letter code: UNC5C-like protein (518 aa).

Residues 1–10 lie on the Extracellular side of the membrane; the sequence is MSPQESSVQP. A helical; Signal-anchor for type III membrane protein membrane pass occupies residues 11–31; sequence SQFLLLVGIPVASALLLAQCL. At 32–518 the chain is on the cytoplasmic side; the sequence is RWHCCQWLPG…NHGLELDEKL (487 aa). In terms of domain architecture, ZU5 spans 102–237; the sequence is VFSAREVDHR…FSLYTCVLEA (136 aa). The segment at 186 to 400 is interaction with RELA and NFKB1; that stretch reads QQPSQACAYS…ETWAVPPPVS (215 aa). The interval 208–235 is peptidase S68; it reads PLGQPGTHISRDECRILLSHFSLYTCVL. Catalysis depends on residues H227 and S229. The Death domain occupies 415–494; sequence QLQMLLEPNS…SAIQNYLNRS (80 aa).

Belongs to the unc-5 family. In terms of assembly, interacts with p65/RELA and NFKB1.

The protein localises to the membrane. The protein resides in the cytoplasm. Its function is as follows. Inhibits NF-kappa-B-dependent transcription by impairing NF-kappa-B binding to its targets. This is UNC5C-like protein (Unc5cl) from Mus musculus (Mouse).